Consider the following 801-residue polypeptide: Phosphatidylinositol 4-phosphate 5-kinase 1 (801 aa).

The first 21 residues, Met-1–Gly-21, serve as a signal peptide directing secretion. 8 MORN repeats span residues Tyr-41–Leu-63, Tyr-64–Ser-86, Tyr-87–Val-109, Tyr-110–Thr-132, Tyr-133–Val-155, Tyr-156–Thr-178, Asn-182–Cys-201, and Tyr-202–Lys-223. In terms of domain architecture, PIPK spans Gly-366–Phe-797.

In terms of tissue distribution, expressed in young seedlings, shoot and seeds, and at lower level in roots, stem and leaf.

It catalyses the reaction a 1,2-diacyl-sn-glycero-3-phospho-(1D-myo-inositol 4-phosphate) + ATP = a 1,2-diacyl-sn-glycero-3-phospho-(1D-myo-inositol-4,5-bisphosphate) + ADP + H(+). Involved in flowering. May suppress floral initiation by modifying the expression of genes related to floral induction. In Oryza sativa subsp. japonica (Rice), this protein is Phosphatidylinositol 4-phosphate 5-kinase 1 (PIPK1).